The chain runs to 683 residues: uncharacterized protein (683 aa).

Composition is skewed to polar residues over residues 407–420 (FETS…TYTP) and 512–529 (EGSS…SSEA). Disordered regions lie at residues 407-427 (FETS…KLST), 509-556 (FSRE…SSTV), and 621-648 (HNTS…DHPD). A compositionally biased stretch (low complexity) spans 531–542 (LPPLLTTTPTPT). 2 stretches are compositionally biased toward polar residues: residues 543–556 (NTEK…SSTV) and 621–630 (HNTSMPNPHH). Residues 633–648 (VKPEDHPHHPEGDHPD) show a composition bias toward basic and acidic residues. Residues 657 to 677 (IWLLPIAGTIFALVALVIVNI) form a helical membrane-spanning segment.

It localises to the host membrane. This is an uncharacterized protein from Alcelaphine herpesvirus 1 (strain C500) (AlHV-1).